The chain runs to 485 residues: Glutamate--tRNA ligase (485 aa).

Residues 11-21 carry the 'HIGH' region motif; sequence PSPTGLLHIGN. Residues 255–259 carry the 'KMSKS' region motif; sequence KLSKR. Residue Lys-258 coordinates ATP.

It belongs to the class-I aminoacyl-tRNA synthetase family. Glutamate--tRNA ligase type 1 subfamily. Monomer.

It is found in the cytoplasm. It catalyses the reaction tRNA(Glu) + L-glutamate + ATP = L-glutamyl-tRNA(Glu) + AMP + diphosphate. Catalyzes the attachment of glutamate to tRNA(Glu) in a two-step reaction: glutamate is first activated by ATP to form Glu-AMP and then transferred to the acceptor end of tRNA(Glu). The protein is Glutamate--tRNA ligase of Streptococcus mutans serotype c (strain ATCC 700610 / UA159).